The primary structure comprises 368 residues: Peptide chain release factor 2 (368 aa).

Glutamine 250 is subject to N5-methylglutamine.

Belongs to the prokaryotic/mitochondrial release factor family. Methylated by PrmC. Methylation increases the termination efficiency of RF2.

It is found in the cytoplasm. Peptide chain release factor 2 directs the termination of translation in response to the peptide chain termination codons UGA and UAA. The sequence is that of Peptide chain release factor 2 from Mycolicibacterium smegmatis (strain ATCC 700084 / mc(2)155) (Mycobacterium smegmatis).